The sequence spans 216 residues: Glycerol-3-phosphate acyltransferase 3 (216 aa).

Transmembrane regions (helical) follow at residues 6-26 (LLLVVIVSYILGSIPFGYLVS), 58-78 (LVASLDVIKGASAVAFAGLVI), 92-112 (LLFAQVLAGLAAVAGHIWPVF), 125-145 (FGGMIALCPVAAIFGGEVLII), and 158-178 (ITGVVGAYALLVPLTLISGFP).

This sequence belongs to the PlsY family. Probably interacts with PlsX.

The protein resides in the cell membrane. It carries out the reaction an acyl phosphate + sn-glycerol 3-phosphate = a 1-acyl-sn-glycero-3-phosphate + phosphate. It functions in the pathway lipid metabolism; phospholipid metabolism. Functionally, catalyzes the transfer of an acyl group from acyl-phosphate (acyl-PO(4)) to glycerol-3-phosphate (G3P) to form lysophosphatidic acid (LPA). This enzyme utilizes acyl-phosphate as fatty acyl donor, but not acyl-CoA or acyl-ACP. This is Glycerol-3-phosphate acyltransferase 3 from Dehalococcoides mccartyi (strain CBDB1).